The chain runs to 232 residues: Putative B3 domain-containing protein Os11g0242900 (232 aa).

Positions 1 to 51 form a DNA-binding region, TF-B3 1; that stretch reads MTVELEKIAGSFFISKGWKTFVHRTGLLSGQYIRFQVLTPSKINVLLFDKK. Residues 92–121 form a disordered region; the sequence is SHTSNKETSSDSRTESMTDIPSSSDNSGET. The segment covering 95–107 has biased composition (basic and acidic residues); sequence SNKETSSDSRTES. Residues 108–121 are compositionally biased toward polar residues; that stretch reads MTDIPSSSDNSGET. The TF-B3 2 DNA-binding region spans 140-232; that stretch reads DIKNYISIIG…PNVKITIDVL (93 aa).

The protein resides in the nucleus. The chain is Putative B3 domain-containing protein Os11g0242900 from Oryza sativa subsp. japonica (Rice).